We begin with the raw amino-acid sequence, 1038 residues long: Zinc finger protein 628 (1038 aa).

The interval 1-31 (MAGSHVDMAPASTTEGTGEKPGPTAPAPTPA) is disordered. Residues 13 to 22 (TTEGTGEKPG) show a composition bias toward low complexity. 6 consecutive C2H2-type zinc fingers follow at residues 34-56 (YECGECGKSFRWSSRLLHHQRTH), 62-84 (YKCPDCPKAFKGSSALLYHQRGH), 90-112 (YQCPDCPKAFKRSSLLQIHRSVH), 118-140 (FTCGQCGLAFKWSSHYQYHLRQH), 146-168 (YPCPDCPKAFKNSSSLRRHRHVH), and 174-196 (YTCGICGKSFTQSTNLRQHQRVH). Thr197 carries the post-translational modification Phosphothreonine. The segment at 202–224 (FRCPLCPKTFTHSSNLLLHHRTH) adopts a C2H2-type 7 zinc-finger fold. Disordered stretches follow at residues 220–242 (HHRTHGPAPGPAPAPAPPGETSR) and 254–273 (LQPRSPPEPPAPPPQPPPVV). Composition is skewed to pro residues over residues 227–237 (APGPAPAPAPP) and 257–273 (RSPPEPPAPPPQPPPVV). 7 consecutive C2H2-type zinc fingers follow at residues 346 to 368 (FACLPCGKSFRTVAGLSRHQHSH), 376 to 398 (FRCGSCDGAFPQLASLLAHQQCH), 446 to 468 (YKCAECGKAFKGSSGLRYHLRDH), 474 to 496 (YQCGECGKAFKRSSLLAIHQRVH), 502 to 524 (FTCGQCGLTFKWSSHYQYHLRLH), 530 to 552 (YACTECGKAFRNTSCLRRHRHVH), and 558 to 580 (HSCSVCGKSFAQTSNLRQHQRVH). Phosphothreonine is present on Thr581. 2 C2H2-type zinc fingers span residues 586–608 (FRCPLCPKTFTHSSNLLLHQRTH) and 614–636 (FACPICGRGFVMAAYLQRHLRTH). Disordered regions lie at residues 637–661 (TPATTTSGTTGSAVASQPPAPLAAA) and 717–763 (PSSV…AGQG). Positions 723–733 (PTPPPPPPPPK) are enriched in pro residues. Over residues 734–756 (VILLPPASAGGPGSGAARPGPRS) the composition is skewed to low complexity. Tandem repeats lie at residues 811 to 821 (VQLQPAQEVAT), 822 to 832 (VQLQPAQEVTT), 833 to 843 (VQLQPAQEVTT), and 844 to 854 (VQLQPLTGQVS). Residues 811-854 (VQLQPAQEVATVQLQPAQEVTTVQLQPAQEVTTVQLQPLTGQVS) form a 4 X 11 AA tandem repeats of VQLQP-[AL]-[QT]-[EG]-[VQ]-[ATV]-[ST] region. The interval 922 to 1038 (DGEQTRLCVQ…LPAVQLVHTF (117 aa)) is interaction with TAF4B.

In terms of assembly, interacts with TAF4B. In terms of tissue distribution, expressed widely in testis, in both germline and somatic cells. Seems to have particularly strong expression in meiotic spermatocytes, postmeiotic round spermatids and Sertoli cells. Not detected in elongating spermatids or mature sperm (at protein level). Expressed in testis, ovary, spleen, lung, brain, liver and kidney. Expressed in D3 embryonic stem cells and F9 embryonal carcinoma cells.

The protein localises to the nucleus. Its function is as follows. Transcriptional activator. Binds DNA on GT-box consensus sequence 5'-TTGGTT-3'. Plays a role in spermiogenesis. The polypeptide is Zinc finger protein 628 (Mus musculus (Mouse)).